The chain runs to 238 residues: Ribonuclease PH (238 aa).

Residues R86 and G124–R126 contribute to the phosphate site.

It belongs to the RNase PH family. As to quaternary structure, homohexameric ring arranged as a trimer of dimers.

It carries out the reaction tRNA(n+1) + phosphate = tRNA(n) + a ribonucleoside 5'-diphosphate. Functionally, phosphorolytic 3'-5' exoribonuclease that plays an important role in tRNA 3'-end maturation. Removes nucleotide residues following the 3'-CCA terminus of tRNAs; can also add nucleotides to the ends of RNA molecules by using nucleoside diphosphates as substrates, but this may not be physiologically important. Probably plays a role in initiation of 16S rRNA degradation (leading to ribosome degradation) during starvation. The sequence is that of Ribonuclease PH from Vibrio atlanticus (strain LGP32) (Vibrio splendidus (strain Mel32)).